Consider the following 126-residue polypeptide: S-adenosylmethionine decarboxylase proenzyme (126 aa).

The active-site Schiff-base intermediate with substrate; via pyruvic acid is serine 63. Residue serine 63 is modified to Pyruvic acid (Ser); by autocatalysis. The active-site Proton acceptor; for processing activity is the histidine 68. The Proton donor; for catalytic activity role is filled by cysteine 83.

The protein belongs to the prokaryotic AdoMetDC family. Type 1 subfamily. In terms of assembly, heterotetramer of two alpha and two beta chains arranged as a dimer of alpha/beta heterodimers. The cofactor is pyruvate. In terms of processing, is synthesized initially as an inactive proenzyme. Formation of the active enzyme involves a self-maturation process in which the active site pyruvoyl group is generated from an internal serine residue via an autocatalytic post-translational modification. Two non-identical subunits are generated from the proenzyme in this reaction, and the pyruvate is formed at the N-terminus of the alpha chain, which is derived from the carboxyl end of the proenzyme. The post-translation cleavage follows an unusual pathway, termed non-hydrolytic serinolysis, in which the side chain hydroxyl group of the serine supplies its oxygen atom to form the C-terminus of the beta chain, while the remainder of the serine residue undergoes an oxidative deamination to produce ammonia and the pyruvoyl group blocking the N-terminus of the alpha chain.

It catalyses the reaction S-adenosyl-L-methionine + H(+) = S-adenosyl 3-(methylsulfanyl)propylamine + CO2. Its pathway is amine and polyamine biosynthesis; S-adenosylmethioninamine biosynthesis; S-adenosylmethioninamine from S-adenosyl-L-methionine: step 1/1. Catalyzes the decarboxylation of S-adenosylmethionine to S-adenosylmethioninamine (dcAdoMet), the propylamine donor required for the synthesis of the polyamines spermine and spermidine from the diamine putrescine. The protein is S-adenosylmethionine decarboxylase proenzyme of Clostridium tetani (strain Massachusetts / E88).